The sequence spans 494 residues: 3-octaprenyl-4-hydroxybenzoate carboxy-lyase (494 aa).

Asparagine 172 lines the Mn(2+) pocket. Residues 175–177, 189–191, and 194–195 each bind prenylated FMN; these read IYR, RWL, and RG. Residue glutamate 238 participates in Mn(2+) binding. The Proton donor role is filled by aspartate 287.

The protein belongs to the UbiD family. As to quaternary structure, homohexamer. Requires prenylated FMN as cofactor. Mn(2+) is required as a cofactor.

Its subcellular location is the cell membrane. It carries out the reaction a 4-hydroxy-3-(all-trans-polyprenyl)benzoate + H(+) = a 2-(all-trans-polyprenyl)phenol + CO2. The protein operates within cofactor biosynthesis; ubiquinone biosynthesis. Its function is as follows. Catalyzes the decarboxylation of 3-octaprenyl-4-hydroxy benzoate to 2-octaprenylphenol, an intermediate step in ubiquinone biosynthesis. This Escherichia coli O9:H4 (strain HS) protein is 3-octaprenyl-4-hydroxybenzoate carboxy-lyase.